Here is a 357-residue protein sequence, read N- to C-terminus: Neutral protease 2 homolog BDCG_00922 (357 aa).

The first 19 residues, 1 to 19 (MRSPQSILAIVAFATTAIA), serve as a signal peptide directing secretion. A propeptide spanning residues 20 to 182 (GVVPSTEKRA…FASLNQFSKR (163 aa)) is cleaved from the precursor. Cystine bridges form between Cys-188-Cys-259, Cys-266-Cys-284, and Cys-297-Cys-357. His-308 is a binding site for Zn(2+). The active site involves Glu-309. His-312 and Asp-323 together coordinate Zn(2+).

Belongs to the peptidase M35 family. Zn(2+) serves as cofactor.

It is found in the secreted. It catalyses the reaction Preferential cleavage of bonds with hydrophobic residues in P1'. Also 3-Asn-|-Gln-4 and 8-Gly-|-Ser-9 bonds in insulin B chain.. Its function is as follows. Secreted metalloproteinase that allows assimilation of proteinaceous substrates. Shows high activities on basic nuclear substrates such as histone and protamine. In Ajellomyces dermatitidis (strain ER-3 / ATCC MYA-2586) (Blastomyces dermatitidis), this protein is Neutral protease 2 homolog BDCG_00922.